We begin with the raw amino-acid sequence, 104 residues long: Protein SMALL AUXIN UP-REGULATED RNA 9 (104 aa).

Belongs to the ARG7 family. As to quaternary structure, interacts with and inhibits PP2C-D subfamily of type 2C phosphatases such as PP2C67/PP2C-D1. As to expression, expressed in etiolated hypocotyls, petioles, leaves and flowers.

The protein localises to the cell membrane. Provide a mechanistic link between auxin and plasma membrane H(+)-ATPases (PM H(+)-ATPases, e.g. AHA1 and AHA2), and triggers PM H(+)-ATPases activity by promoting phosphorylation of their C-terminal autoinhibitory domain as a result of PP2C-D subfamily of type 2C phosphatases inhibition, thus leading to the acidification of the apoplast and the facilitation of solutes and water uptake to drive cell expansion. Triggers plant growth probably by promoting cell elongation. Regulates branch angles and bending. Probably involved in light intensity mediated root development. In Arabidopsis thaliana (Mouse-ear cress), this protein is Protein SMALL AUXIN UP-REGULATED RNA 9.